We begin with the raw amino-acid sequence, 436 residues long: Trigger factor (436 aa).

Residues 163–248 (GDRATIDFEG…VKKIEAAHLP (86 aa)) enclose the PPIase FKBP-type domain.

The protein belongs to the FKBP-type PPIase family. Tig subfamily.

The protein resides in the cytoplasm. It carries out the reaction [protein]-peptidylproline (omega=180) = [protein]-peptidylproline (omega=0). In terms of biological role, involved in protein export. Acts as a chaperone by maintaining the newly synthesized protein in an open conformation. Functions as a peptidyl-prolyl cis-trans isomerase. The polypeptide is Trigger factor (Polaromonas sp. (strain JS666 / ATCC BAA-500)).